Consider the following 230-residue polypeptide: 5'-methylthioadenosine/S-adenosylhomocysteine nucleosidase (230 aa).

The active-site Proton acceptor is glutamate 12. Substrate-binding positions include glycine 78, valine 152, and 173–174; that span reads ME. Aspartate 197 acts as the Proton donor in catalysis.

It belongs to the PNP/UDP phosphorylase family. MtnN subfamily.

It catalyses the reaction S-adenosyl-L-homocysteine + H2O = S-(5-deoxy-D-ribos-5-yl)-L-homocysteine + adenine. The enzyme catalyses S-methyl-5'-thioadenosine + H2O = 5-(methylsulfanyl)-D-ribose + adenine. The catalysed reaction is 5'-deoxyadenosine + H2O = 5-deoxy-D-ribose + adenine. It functions in the pathway amino-acid biosynthesis; L-methionine biosynthesis via salvage pathway; S-methyl-5-thio-alpha-D-ribose 1-phosphate from S-methyl-5'-thioadenosine (hydrolase route): step 1/2. Its function is as follows. Catalyzes the irreversible cleavage of the glycosidic bond in both 5'-methylthioadenosine (MTA) and S-adenosylhomocysteine (SAH/AdoHcy) to adenine and the corresponding thioribose, 5'-methylthioribose and S-ribosylhomocysteine, respectively. Also cleaves 5'-deoxyadenosine, a toxic by-product of radical S-adenosylmethionine (SAM) enzymes, into 5-deoxyribose and adenine. The sequence is that of 5'-methylthioadenosine/S-adenosylhomocysteine nucleosidase from Glaesserella parasuis serovar 5 (strain SH0165) (Haemophilus parasuis).